We begin with the raw amino-acid sequence, 208 residues long: 2-phospho-L-lactate guanylyltransferase (208 aa).

It belongs to the CofC family. In terms of assembly, homodimer.

The enzyme catalyses (2S)-2-phospholactate + GTP + H(+) = (2S)-lactyl-2-diphospho-5'-guanosine + diphosphate. Its pathway is cofactor biosynthesis; coenzyme F420 biosynthesis. In terms of biological role, guanylyltransferase that catalyzes the activation of (2S)-2-phospholactate (2-PL) as (2S)-lactyl-2-diphospho-5'-guanosine, via the condensation of 2-PL with GTP. It is involved in the biosynthesis of coenzyme F420, a hydride carrier cofactor. The protein is 2-phospho-L-lactate guanylyltransferase of Haloarcula marismortui (strain ATCC 43049 / DSM 3752 / JCM 8966 / VKM B-1809) (Halobacterium marismortui).